The primary structure comprises 206 residues: MTASVLRSISLALRPTSGLLGTWQTQLRETHQRASLLSFWELIPMRSEPLRKKKKVDPKKDQEAKERLKRKIRKLEKATQELIPIEDFITPLKFLDKARERPQVELTFEETERRALLLKKWSLYKQQERKMERDTIRAMLEAQQEALEELQLESPKLHAEAIKRDPNLFPFEKEGPHYTPPIPNYQPPEGRYNDITKVYTQVEFKR.

The N-terminal 46 residues, 1–46 (MTASVLRSISLALRPTSGLLGTWQTQLRETHQRASLLSFWELIPMR), are a transit peptide targeting the mitochondrion. The interval 168–192 (LFPFEKEGPHYTPPIPNYQPPEGRY) is disordered.

It belongs to the mitochondrion-specific ribosomal protein mL40 family. In terms of assembly, component of the mitochondrial large ribosomal subunit (mt-LSU). Mature mammalian 55S mitochondrial ribosomes consist of a small (28S) and a large (39S) subunit. The 28S small subunit contains a 12S ribosomal RNA (12S mt-rRNA) and 30 different proteins. The 39S large subunit contains a 16S rRNA (16S mt-rRNA), a copy of mitochondrial valine transfer RNA (mt-tRNA(Val)), which plays an integral structural role, and 52 different proteins. mL40 binds to the major groove of the anticodon stem of mt-tRNA(Val) in the central protuberance. As to expression, ubiquitous.

The protein resides in the mitochondrion. The sequence is that of Large ribosomal subunit protein mL40 (MRPL40) from Homo sapiens (Human).